Here is a 192-residue protein sequence, read N- to C-terminus: Glycerol-3-phosphate acyltransferase (192 aa).

The next 5 helical transmembrane spans lie at 3 to 23 (ALFL…EVIA), 51 to 71 (YGVL…LIAV), 80 to 100 (VLTF…FFGF), 112 to 132 (VVFA…LGIF), and 149 to 169 (AFLF…AIVI).

The protein belongs to the PlsY family. As to quaternary structure, probably interacts with PlsX.

It is found in the cell inner membrane. The catalysed reaction is an acyl phosphate + sn-glycerol 3-phosphate = a 1-acyl-sn-glycero-3-phosphate + phosphate. It participates in lipid metabolism; phospholipid metabolism. In terms of biological role, catalyzes the transfer of an acyl group from acyl-phosphate (acyl-PO(4)) to glycerol-3-phosphate (G3P) to form lysophosphatidic acid (LPA). This enzyme utilizes acyl-phosphate as fatty acyl donor, but not acyl-CoA or acyl-ACP. This is Glycerol-3-phosphate acyltransferase from Aquifex aeolicus (strain VF5).